The chain runs to 334 residues: UDP-N-acetylenolpyruvoylglucosamine reductase (334 aa).

One can recognise an FAD-binding PCMH-type domain in the interval Ile16 to Thr186. The active site involves Arg162. Residue Ser232 is the Proton donor of the active site. Glu329 is a catalytic residue.

Belongs to the MurB family. The cofactor is FAD.

It is found in the cytoplasm. The catalysed reaction is UDP-N-acetyl-alpha-D-muramate + NADP(+) = UDP-N-acetyl-3-O-(1-carboxyvinyl)-alpha-D-glucosamine + NADPH + H(+). It functions in the pathway cell wall biogenesis; peptidoglycan biosynthesis. In terms of biological role, cell wall formation. This Buchnera aphidicola subsp. Baizongia pistaciae (strain Bp) protein is UDP-N-acetylenolpyruvoylglucosamine reductase.